Here is an 876-residue protein sequence, read N- to C-terminus: MEIASKYNPEEVESKWYNYWMEYGCFISVPDGRKPYTVVIPPPNVTGVLHMGHMLNNTIQDILVRRARMKGYNACWVPGTDHASIATEAKVVGRLAAQGISKQDLGREEFLRHAWDWTHEHGGIILEQLKRLGASCDWTRTAFTMDESRSESVIKVFVDLYNKGLIYRGIRVVNWDPKALTALSDEEVIYKETNGKLYYLRYFVENEPDKYIIVATTRPETIMGDTAVCVNPNDERYRWLRGKRVIVPTVGRAVPIIEDEYVDMEFGTGCLKVTPAHDVNDYMLGQKHRLESIDIFHDNGILNEHGGPYAGMDRFDVRKKIEQDLIDAGLMERVENYVNKVGYSERTDVPIEPKLSMQWFLQMESLAKSALDAVMNDEIKLHPAKFKNTYRHWMENVKDWCISRQLWWGHRIPAYYLPDGSIVVAETAEKAVELARKQTGSDSLTAEDLRQDSDSLDTWFSSWLWPISVFGDVMDPENEELDYYYPTSDLVTAPDILFFWVARMIMAGYEYRGKKPFDNVYLTGIVRDGQGRKMSKSLGNSPDPIMLMEKYGADGVRMGLMMAAPAGNDVLFDESLSEQGRNFCNKIWNAFRLVKGWQQAETATQPEASALAVKWFGYRLDEVKTELDDLFSKYRLSEALTLVYKLFWDDFSSWYLEMVKPAYGQPMDAKTYGSTIGFFDQLLRLLHPFMPFITEELWHALASRHDGETIMLCLLPDAHETDRDFLQAFDRTREIIAAIRNIRTGKNVPFKEKLTLEAGNEHDASFDAVIIKMGNLEAINRVEEKTSGSTSFLIGTLEYAIPMGALIDVEEEIKKLSDELAYQEKFLASVMKKLGNESFVAKAPQAVIELEQKKKSDAEARIATLRDSLNQLQSTK.

Positions 43–53 (PNVTGVLHMGH) match the 'HIGH' region motif. A 'KMSKS' region motif is present at residues 533 to 537 (KMSKS). An ATP-binding site is contributed by lysine 536. Residues 804 to 876 (GALIDVEEEI…DSLNQLQSTK (73 aa)) adopt a coiled-coil conformation.

The protein belongs to the class-I aminoacyl-tRNA synthetase family. ValS type 1 subfamily. In terms of assembly, monomer.

The protein resides in the cytoplasm. It carries out the reaction tRNA(Val) + L-valine + ATP = L-valyl-tRNA(Val) + AMP + diphosphate. Its function is as follows. Catalyzes the attachment of valine to tRNA(Val). As ValRS can inadvertently accommodate and process structurally similar amino acids such as threonine, to avoid such errors, it has a 'posttransfer' editing activity that hydrolyzes mischarged Thr-tRNA(Val) in a tRNA-dependent manner. This chain is Valine--tRNA ligase, found in Porphyromonas gingivalis (strain ATCC 33277 / DSM 20709 / CIP 103683 / JCM 12257 / NCTC 11834 / 2561).